A 205-amino-acid polypeptide reads, in one-letter code: Photosystem I assembly protein Ycf4 (205 aa).

2 helical membrane-spanning segments follow: residues 23–43 (WATV…SSYI) and 86–106 (LMCF…CLIF).

This sequence belongs to the Ycf4 family.

Its subcellular location is the plastid. The protein resides in the chloroplast thylakoid membrane. In terms of biological role, seems to be required for the assembly of the photosystem I complex. The polypeptide is Photosystem I assembly protein Ycf4 (Tetradesmus obliquus (Green alga)).